A 131-amino-acid polypeptide reads, in one-letter code: Fluoride-specific ion channel FluC 1 (131 aa).

Helical transmembrane passes span 4 to 24, 32 to 52, 66 to 86, and 95 to 115; these read ILLI…LSGW, FPLG…LVMY, ILLT…SYES, and LMQL…AVYL. Na(+) is bound by residues Gly74 and Thr77.

This sequence belongs to the fluoride channel Fluc/FEX (TC 1.A.43) family.

It is found in the cell membrane. The catalysed reaction is fluoride(in) = fluoride(out). With respect to regulation, na(+) is not transported, but it plays an essential structural role and its presence is essential for fluoride channel function. Functionally, fluoride-specific ion channel. Important for reducing fluoride concentration in the cell, thus reducing its toxicity. In Methanosarcina acetivorans (strain ATCC 35395 / DSM 2834 / JCM 12185 / C2A), this protein is Fluoride-specific ion channel FluC 1.